The sequence spans 265 residues: Type II pantothenate kinase (265 aa).

6–13 (DAGGTLIK) serves as a coordination point for ATP. E70 serves as the catalytic Proton acceptor. ATP-binding positions include T99, 121–125 (GGMIQ), Y137, and S225.

It belongs to the type II pantothenate kinase family. Homodimer.

Its subcellular location is the cytoplasm. It catalyses the reaction (R)-pantothenate + ATP = (R)-4'-phosphopantothenate + ADP + H(+). It participates in cofactor biosynthesis; coenzyme A biosynthesis; CoA from (R)-pantothenate: step 1/5. Catalyzes the phosphorylation of pantothenate (Pan), the first step in CoA biosynthesis. In Staphylococcus saprophyticus subsp. saprophyticus (strain ATCC 15305 / DSM 20229 / NCIMB 8711 / NCTC 7292 / S-41), this protein is Type II pantothenate kinase.